The sequence spans 507 residues: Histidine ammonia-lyase (507 aa).

A cross-link (5-imidazolinone (Ala-Gly)) is located at residues 142-144 (ASG). Residue serine 143 is modified to 2,3-didehydroalanine (Ser).

This sequence belongs to the PAL/histidase family. Contains an active site 4-methylidene-imidazol-5-one (MIO), which is formed autocatalytically by cyclization and dehydration of residues Ala-Ser-Gly.

It localises to the cytoplasm. The enzyme catalyses L-histidine = trans-urocanate + NH4(+). It participates in amino-acid degradation; L-histidine degradation into L-glutamate; N-formimidoyl-L-glutamate from L-histidine: step 1/3. This chain is Histidine ammonia-lyase, found in Symbiobacterium thermophilum (strain DSM 24528 / JCM 14929 / IAM 14863 / T).